We begin with the raw amino-acid sequence, 267 residues long: Kafirin PSK8 (267 aa).

The signal sequence occupies residues 1 to 19 (TKIFALLALHALLVSGTTA).

It belongs to the zein family.

Major seed storage prolamin. This Sorghum bicolor (Sorghum) protein is Kafirin PSK8.